The primary structure comprises 582 residues: Glutamine--tRNA ligase (582 aa).

Positions 50–60 (PEPNGYLHIGH) match the 'HIGH' region motif. ATP contacts are provided by residues 51-53 (EPN) and 57-63 (HIGHAKS). L-glutamine-binding residues include Asp-83 and Tyr-235. Residues Thr-254 and 289–290 (RL) contribute to the ATP site. The 'KMSKS' region signature appears at 296–300 (ITSKR).

The protein belongs to the class-I aminoacyl-tRNA synthetase family. In terms of assembly, monomer.

The protein localises to the cytoplasm. It catalyses the reaction tRNA(Gln) + L-glutamine + ATP = L-glutaminyl-tRNA(Gln) + AMP + diphosphate. The sequence is that of Glutamine--tRNA ligase from Cupriavidus metallidurans (strain ATCC 43123 / DSM 2839 / NBRC 102507 / CH34) (Ralstonia metallidurans).